The chain runs to 89 residues: Small ribosomal subunit protein uS15 (89 aa).

Belongs to the universal ribosomal protein uS15 family. As to quaternary structure, part of the 30S ribosomal subunit. Forms a bridge to the 50S subunit in the 70S ribosome, contacting the 23S rRNA.

In terms of biological role, one of the primary rRNA binding proteins, it binds directly to 16S rRNA where it helps nucleate assembly of the platform of the 30S subunit by binding and bridging several RNA helices of the 16S rRNA. Its function is as follows. Forms an intersubunit bridge (bridge B4) with the 23S rRNA of the 50S subunit in the ribosome. The polypeptide is Small ribosomal subunit protein uS15 (Prochlorococcus marinus (strain MIT 9312)).